The following is a 361-amino-acid chain: MYKLLGGLKEYLKWQDIVTDNAIFRLHNLFTTVLLLTCSLIITATQYVGNPIHCIVNGLPVRPINTYCWITSTFTMPDAFLRQVGSEVAHPGVANDFGDEDAKKYYTYYQWVCFVLFFQAMLCYTPKWIWDSIEGGLLRTLIMGLNRGLCQDDEKCMKKKALIEYLLRHIKRHNMYALKYWFCETLCLVNIIGQLYLMNHFFDGEFFSYGLRVVAFSEQSQEERVDPMVYVFPRVTKCTFHKYGASGSIQKHDSLCVLPLNIVNEKTYIFLWFWYIILAALLSVLVVYRAVILAVPSVRPILLHARNRMVPKEVTNAICRKTDVGDWWILYMLGRNMDPMIYGEVIADLAKKIETPSSNNP.

Topologically, residues 1-28 (MYKLLGGLKEYLKWQDIVTDNAIFRLHN) are cytoplasmic. A helical transmembrane segment spans residues 29–49 (LFTTVLLLTCSLIITATQYVG). The Extracellular segment spans residues 50–109 (NPIHCIVNGLPVRPINTYCWITSTFTMPDAFLRQVGSEVAHPGVANDFGDEDAKKYYTYY). Residues 110 to 130 (QWVCFVLFFQAMLCYTPKWIW) traverse the membrane as a helical segment. The Cytoplasmic portion of the chain corresponds to 131-181 (DSIEGGLLRTLIMGLNRGLCQDDEKCMKKKALIEYLLRHIKRHNMYALKYW). The helical transmembrane segment at 182–202 (FCETLCLVNIIGQLYLMNHFF) threads the bilayer. The Extracellular segment spans residues 203 to 267 (DGEFFSYGLR…LPLNIVNEKT (65 aa)). Residues 268–288 (YIFLWFWYIILAALLSVLVVY) traverse the membrane as a helical segment. The Cytoplasmic segment spans residues 289–361 (RAVILAVPSV…KIETPSSNNP (73 aa)).

Belongs to the pannexin family. In terms of tissue distribution, expressed in embryonic neural precursors including the dorsal median neuroblast, glial cells, neuropilar glial ring, developing myoblasts cells and in a circumferential band of epithelial cells at the trochanter/coxa boundary stripe in the developing limb.

Its subcellular location is the cell membrane. The protein resides in the cell junction. It localises to the gap junction. Structural components of the gap junctions. In Schistocerca americana (American grasshopper), this protein is Innexin inx1 (inx1).